The following is a 96-amino-acid chain: Fluoride-specific ion channel FluC 1 (96 aa).

Transmembrane regions (helical) follow at residues 4 to 24 (LIQG…RLAL) and 26 to 46 (LWLG…AFLM). Positions 61 and 64 each coordinate Na(+). The helical transmembrane segment at 69-89 (MMLNDVSFYFFTAVGCILAWL) threads the bilayer.

This sequence belongs to the fluoride channel Fluc/FEX (TC 1.A.43) family.

The protein resides in the cell membrane. It catalyses the reaction fluoride(in) = fluoride(out). Na(+) is not transported, but it plays an essential structural role and its presence is essential for fluoride channel function. In terms of biological role, fluoride-specific ion channel. Important for reducing fluoride concentration in the cell, thus reducing its toxicity. The chain is Fluoride-specific ion channel FluC 1 from Corynebacterium glutamicum (strain ATCC 13032 / DSM 20300 / JCM 1318 / BCRC 11384 / CCUG 27702 / LMG 3730 / NBRC 12168 / NCIMB 10025 / NRRL B-2784 / 534).